Here is a 420-residue protein sequence, read N- to C-terminus: Tryptophan synthase beta chain (420 aa).

An N6-(pyridoxal phosphate)lysine modification is found at Lys-112.

It belongs to the TrpB family. Tetramer of two alpha and two beta chains. The cofactor is pyridoxal 5'-phosphate.

The catalysed reaction is (1S,2R)-1-C-(indol-3-yl)glycerol 3-phosphate + L-serine = D-glyceraldehyde 3-phosphate + L-tryptophan + H2O. The protein operates within amino-acid biosynthesis; L-tryptophan biosynthesis; L-tryptophan from chorismate: step 5/5. In terms of biological role, the beta subunit is responsible for the synthesis of L-tryptophan from indole and L-serine. This chain is Tryptophan synthase beta chain, found in Thermosipho africanus (strain TCF52B).